The primary structure comprises 90 residues: Cell division topological specificity factor (90 aa).

This sequence belongs to the MinE family.

Prevents the cell division inhibition by proteins MinC and MinD at internal division sites while permitting inhibition at polar sites. This ensures cell division at the proper site by restricting the formation of a division septum at the midpoint of the long axis of the cell. The chain is Cell division topological specificity factor from Bordetella avium (strain 197N).